A 197-amino-acid chain; its full sequence is Imidazoleglycerol-phosphate dehydratase (197 aa).

The protein belongs to the imidazoleglycerol-phosphate dehydratase family.

It is found in the cytoplasm. It carries out the reaction D-erythro-1-(imidazol-4-yl)glycerol 3-phosphate = 3-(imidazol-4-yl)-2-oxopropyl phosphate + H2O. It functions in the pathway amino-acid biosynthesis; L-histidine biosynthesis; L-histidine from 5-phospho-alpha-D-ribose 1-diphosphate: step 6/9. The protein is Imidazoleglycerol-phosphate dehydratase of Azotobacter vinelandii (strain DJ / ATCC BAA-1303).